The chain runs to 179 residues: MARLKDYYQKELVAKLKTELGLDNIMEVPTIKKITLNMGVGDAAKDKKIMTFALNDLTAIAGQKPVVTKSKKSIAGFKIRDGWPIGAKVTLRGDRMYEFLDRLITIAIPRIRDFRGLSAKSFDGRGNYSLGMREQISFPEIDYDKVDSIRGLDISITTTAKNDDQGRALLKAFGFPFKS.

Belongs to the universal ribosomal protein uL5 family. As to quaternary structure, part of the 50S ribosomal subunit; part of the 5S rRNA/L5/L18/L25 subcomplex. Contacts the 5S rRNA and the P site tRNA. Forms a bridge to the 30S subunit in the 70S ribosome.

Its function is as follows. This is one of the proteins that bind and probably mediate the attachment of the 5S RNA into the large ribosomal subunit, where it forms part of the central protuberance. In the 70S ribosome it contacts protein S13 of the 30S subunit (bridge B1b), connecting the 2 subunits; this bridge is implicated in subunit movement. Contacts the P site tRNA; the 5S rRNA and some of its associated proteins might help stabilize positioning of ribosome-bound tRNAs. This Francisella tularensis subsp. tularensis (strain SCHU S4 / Schu 4) protein is Large ribosomal subunit protein uL5.